Here is a 189-residue protein sequence, read N- to C-terminus: GTP cyclohydrolase 1 (189 aa).

Residues C79, H82, and C150 each coordinate Zn(2+).

It belongs to the GTP cyclohydrolase I family. In terms of assembly, homomer.

The enzyme catalyses GTP + H2O = 7,8-dihydroneopterin 3'-triphosphate + formate + H(+). It participates in cofactor biosynthesis; 7,8-dihydroneopterin triphosphate biosynthesis; 7,8-dihydroneopterin triphosphate from GTP: step 1/1. This is GTP cyclohydrolase 1 from Rickettsia peacockii (strain Rustic).